Consider the following 437-residue polypeptide: Phosphomethylpyrimidine synthase (437 aa).

Substrate is bound by residues asparagine 69, methionine 98, tyrosine 127, histidine 163, 185–187, 226–229, and glutamate 265; these read SRG and DACR. Histidine 269 serves as a coordination point for Zn(2+). Tyrosine 292 contacts substrate. Position 333 (histidine 333) interacts with Zn(2+). The [4Fe-4S] cluster site is built by cysteine 409, cysteine 412, and cysteine 416.

It belongs to the ThiC family. It depends on [4Fe-4S] cluster as a cofactor.

It carries out the reaction 5-amino-1-(5-phospho-beta-D-ribosyl)imidazole + S-adenosyl-L-methionine = 4-amino-2-methyl-5-(phosphooxymethyl)pyrimidine + CO + 5'-deoxyadenosine + formate + L-methionine + 3 H(+). The protein operates within cofactor biosynthesis; thiamine diphosphate biosynthesis. Functionally, catalyzes the synthesis of the hydroxymethylpyrimidine phosphate (HMP-P) moiety of thiamine from aminoimidazole ribotide (AIR) in a radical S-adenosyl-L-methionine (SAM)-dependent reaction. The protein is Phosphomethylpyrimidine synthase of Clostridium botulinum (strain Okra / Type B1).